Consider the following 120-residue polypeptide: NAD(P)H-quinone oxidoreductase subunit 3, chloroplastic (120 aa).

Helical transmembrane passes span 9–29 (IFWVFLIISSVIPILAFLISG), 64–84 (MFALVFVVFDVETVFLYPWAM), and 88–108 (VLGVSVFIEALIFVLILIVGL).

It belongs to the complex I subunit 3 family. In terms of assembly, NDH is composed of at least 16 different subunits, 5 of which are encoded in the nucleus.

The protein resides in the plastid. It is found in the chloroplast thylakoid membrane. It carries out the reaction a plastoquinone + NADH + (n+1) H(+)(in) = a plastoquinol + NAD(+) + n H(+)(out). The catalysed reaction is a plastoquinone + NADPH + (n+1) H(+)(in) = a plastoquinol + NADP(+) + n H(+)(out). In terms of biological role, NDH shuttles electrons from NAD(P)H:plastoquinone, via FMN and iron-sulfur (Fe-S) centers, to quinones in the photosynthetic chain and possibly in a chloroplast respiratory chain. The immediate electron acceptor for the enzyme in this species is believed to be plastoquinone. Couples the redox reaction to proton translocation, and thus conserves the redox energy in a proton gradient. The protein is NAD(P)H-quinone oxidoreductase subunit 3, chloroplastic of Cucumis sativus (Cucumber).